A 305-amino-acid polypeptide reads, in one-letter code: tRNA pseudouridine synthase B (305 aa).

The Nucleophile role is filled by Asp-39.

This sequence belongs to the pseudouridine synthase TruB family. Type 1 subfamily.

The enzyme catalyses uridine(55) in tRNA = pseudouridine(55) in tRNA. Functionally, responsible for synthesis of pseudouridine from uracil-55 in the psi GC loop of transfer RNAs. This is tRNA pseudouridine synthase B from Staphylococcus aureus (strain MSSA476).